Here is a 211-residue protein sequence, read N- to C-terminus: Protein crossbronx-like (211 aa).

One can recognise a UBC core domain in the interval 17 to 177 (NQGYQILAEY…VRNSILWSCK (161 aa)).

It belongs to the ubiquitin-conjugating enzyme family. FTS subfamily.

In Drosophila grimshawi (Hawaiian fruit fly), this protein is Protein crossbronx-like.